Consider the following 214-residue polypeptide: Ribonuclease HII (214 aa).

The RNase H type-2 domain occupies 27 to 214 (SVVAGIDEAG…SPIKQMCAIV (188 aa)). Positions 33, 34, and 126 each coordinate a divalent metal cation.

Belongs to the RNase HII family. Requires Mn(2+) as cofactor. Mg(2+) serves as cofactor.

The protein localises to the cytoplasm. It catalyses the reaction Endonucleolytic cleavage to 5'-phosphomonoester.. Endonuclease that specifically degrades the RNA of RNA-DNA hybrids. The chain is Ribonuclease HII (rnhB) from Chlamydia pneumoniae (Chlamydophila pneumoniae).